The following is a 388-amino-acid chain: Succinate--CoA ligase [ADP-forming] subunit beta (388 aa).

Residues 9–245 enclose the ATP-grasp domain; sequence KALLKEYGMP…KSQENERELK (237 aa). ATP contacts are provided by residues lysine 46, 53–55, glutamate 100, tyrosine 103, and glutamate 108; that span reads GRG. Mg(2+) is bound by residues asparagine 200 and aspartate 214. Residues asparagine 265 and 322-324 contribute to the substrate site; that span reads GIV.

It belongs to the succinate/malate CoA ligase beta subunit family. Heterotetramer of two alpha and two beta subunits. The cofactor is Mg(2+).

It carries out the reaction succinate + ATP + CoA = succinyl-CoA + ADP + phosphate. It catalyses the reaction GTP + succinate + CoA = succinyl-CoA + GDP + phosphate. It participates in carbohydrate metabolism; tricarboxylic acid cycle; succinate from succinyl-CoA (ligase route): step 1/1. Its function is as follows. Succinyl-CoA synthetase functions in the citric acid cycle (TCA), coupling the hydrolysis of succinyl-CoA to the synthesis of either ATP or GTP and thus represents the only step of substrate-level phosphorylation in the TCA. The beta subunit provides nucleotide specificity of the enzyme and binds the substrate succinate, while the binding sites for coenzyme A and phosphate are found in the alpha subunit. The polypeptide is Succinate--CoA ligase [ADP-forming] subunit beta (Acinetobacter baumannii (strain SDF)).